A 365-amino-acid polypeptide reads, in one-letter code: Chorismate synthase (365 aa).

Arginine 46 lines the NADP(+) pocket. Residues 123 to 125, 241 to 242, glycine 281, 296 to 300, and arginine 322 each bind FMN; these read RSS, NG, and KPTPS.

This sequence belongs to the chorismate synthase family. Homotetramer. Requires FMNH2 as cofactor.

The catalysed reaction is 5-O-(1-carboxyvinyl)-3-phosphoshikimate = chorismate + phosphate. The protein operates within metabolic intermediate biosynthesis; chorismate biosynthesis; chorismate from D-erythrose 4-phosphate and phosphoenolpyruvate: step 7/7. Its function is as follows. Catalyzes the anti-1,4-elimination of the C-3 phosphate and the C-6 proR hydrogen from 5-enolpyruvylshikimate-3-phosphate (EPSP) to yield chorismate, which is the branch point compound that serves as the starting substrate for the three terminal pathways of aromatic amino acid biosynthesis. This reaction introduces a second double bond into the aromatic ring system. The sequence is that of Chorismate synthase from Helicobacter pylori (strain Shi470).